The chain runs to 836 residues: CUB domain-containing protein 1 (836 aa).

Positions 1–29 (MAGLNCGVSIALLGVLLLGAARLPRGAEA) are cleaved as a signal peptide. The Extracellular segment spans residues 30-667 (FEIALPRESN…TLTPRTVDLT (638 aa)). 7 N-linked (GlcNAc...) asparagine glycosylation sites follow: Asn-39, Asn-122, Asn-180, Asn-205, Asn-270, Asn-310, and Asn-386. Positions 417–544 (CTDHRYCQRK…VSFIPYFKEE (128 aa)) constitute a CUB domain. Cys-476 and Cys-499 are disulfide-bonded. Residues 668 to 688 (VILIAAVGGGVLLLSALGLII) form a helical membrane-spanning segment. Over 689–836 (CCVKKKKKKT…NTQEPMEPAE (148 aa)) the chain is Cytoplasmic. Tyr-734 bears the Phosphotyrosine mark. Positions 776 to 836 (PPTICSRAPT…NTQEPMEPAE (61 aa)) are disordered.

In terms of assembly, interacts with CDH2/N-cadherin, CDH3/P-cadherin, SDC1/syndecan-1, SDC4/syndecan-4 and the serine protease ST14/MT-SP1. Also interacts with SRC and PRKCG/protein kinase C gamma. In terms of processing, phosphorylated on tyrosine by kinases of the SRC family such as SRC and YES as well as by the protein kinase C gamma/PRKCG. Dephosphorylated by phosphotyrosine phosphatases. Also phosphorylated by suramin, a heparin analog. Tyrosine phosphorylated in response to dissociation of integrin alpha-6 beta-4 from laminin-5. N-glycosylated. Post-translationally, a soluble form may also be produced by proteolytic cleavage at the cell surface (shedding). Another peptide of 80 kDa (p80) is present in cultured keratinocytes probably due to tryptic cleavage at an unidentified site on its N-terminal side. Converted to p80 by plasmin, a trypsin-like protease. In terms of tissue distribution, highly expressed in mitotic cells with low expression during interphase. Detected at highest levels in skeletal muscle and colon with lower levels in kidney, small intestine, placenta and lung. Up-regulated in a number of human tumor cell lines, as well as in colorectal cancer, breast carcinoma and lung cancer. Also expressed in cells with phenotypes reminiscent of mesenchymal stem cells and neural stem cells.

Its subcellular location is the cell membrane. The protein localises to the secreted. Functionally, may be involved in cell adhesion and cell matrix association. May play a role in the regulation of anchorage versus migration or proliferation versus differentiation via its phosphorylation. May be a novel marker for leukemia diagnosis and for immature hematopoietic stem cell subsets. Belongs to the tetraspanin web involved in tumor progression and metastasis. This is CUB domain-containing protein 1 (CDCP1) from Homo sapiens (Human).